The chain runs to 519 residues: Probable cytochrome P450 6g2 (519 aa).

Residue cysteine 460 coordinates heme.

Belongs to the cytochrome P450 family. Heme is required as a cofactor.

The protein localises to the endoplasmic reticulum membrane. It localises to the microsome membrane. In terms of biological role, may be involved in the metabolism of insect hormones and in the breakdown of synthetic insecticides. The sequence is that of Probable cytochrome P450 6g2 (Cyp6g2) from Drosophila melanogaster (Fruit fly).